The following is a 305-amino-acid chain: Probable lipid kinase YegS-like (305 aa).

Residues 1 to 129 (MTQRRAMLIL…VDLGEVGGKL (129 aa)) form the DAGKc domain. ATP is bound by residues threonine 39, 65–71 (GDGTLRD), and threonine 92. Positions 210, 213, and 215 each coordinate Mg(2+). Glutamate 268 functions as the Proton acceptor in the catalytic mechanism.

This sequence belongs to the diacylglycerol/lipid kinase family. YegS lipid kinase subfamily. Mg(2+) is required as a cofactor. It depends on Ca(2+) as a cofactor.

It localises to the cytoplasm. Its function is as follows. Probably phosphorylates lipids; the in vivo substrate is unknown. In Pseudomonas savastanoi pv. phaseolicola (strain 1448A / Race 6) (Pseudomonas syringae pv. phaseolicola (strain 1448A / Race 6)), this protein is Probable lipid kinase YegS-like.